A 129-amino-acid polypeptide reads, in one-letter code: Follitropin subunit beta (129 aa).

The first 20 residues, 1 to 20, serve as a signal peptide directing secretion; that stretch reads MKTLQFFFLFCCWKAICCNS. Intrachain disulfides connect Cys21–Cys69, Cys35–Cys84, Cys38–Cys122, Cys46–Cys100, Cys50–Cys102, and Cys105–Cys112. Asn25 and Asn42 each carry an N-linked (GlcNAc...) asparagine glycan.

The protein belongs to the glycoprotein hormones subunit beta family. In terms of assembly, heterodimer. The active follitropin is a heterodimer composed of an alpha chain/CGA shared with other hormones and a unique beta chain/FSHB shown here.

The protein resides in the secreted. In terms of biological role, together with the alpha chain CGA constitutes follitropin, the follicle-stimulating hormone, and provides its biological specificity to the hormone heterodimer. Binds FSHR, a G protein-coupled receptor, on target cells to activate downstream signaling pathways. Follitropin is involved in follicle development and spermatogenesis in reproductive organs. The sequence is that of Follitropin subunit beta (FSHB) from Gorilla gorilla gorilla (Western lowland gorilla).